A 270-amino-acid chain; its full sequence is 1-deoxy-11-beta-hydroxypentalenate dehydrogenase (270 aa).

12-36 (GAASGIGFALSARLAQAGARVVMTD) serves as a coordination point for NAD(+). Residue serine 144 participates in substrate binding. Catalysis depends on tyrosine 157, which acts as the Proton acceptor. Residue lysine 161 participates in NAD(+) binding.

The protein belongs to the short-chain dehydrogenases/reductases (SDR) family.

The enzyme catalyses 1-deoxy-11beta-hydroxypentalenate + NAD(+) = 1-deoxy-11-oxopentalenate + NADH + H(+). It functions in the pathway antibiotic biosynthesis; neopentalenolactone biosynthesis. Catalyzes the oxidation of 1-deoxy-11-beta-hydroxypentalenic acid to 1-deoxy-11-oxopentalenic acid in the biosynthesis of neopentalenolactone antibiotic. This Streptomyces avermitilis (strain ATCC 31267 / DSM 46492 / JCM 5070 / NBRC 14893 / NCIMB 12804 / NRRL 8165 / MA-4680) protein is 1-deoxy-11-beta-hydroxypentalenate dehydrogenase (ptlF).